The chain runs to 733 residues: Ribosomal protein S6 kinase alpha-2 (733 aa).

The Protein kinase 1 domain maps to 59–318; that stretch reads FELLKVLGQG…VEEIKRHPFF (260 aa). Residues 65 to 73 and Lys-91 contribute to the ATP site; that span reads LGQGSYGKV. Asp-184 serves as the catalytic Proton acceptor. Ser-218 bears the Phosphoserine; by PDPK1 mark. An AGC-kinase C-terminal domain is found at 319 to 388; sequence VTIDWNTLYR…VASSLIQEPS (70 aa). Position 377 is a phosphoserine (Ser-377). The Protein kinase 2 domain maps to 415-672; the sequence is YEIKEDIGVG…AMQVLKHPWV (258 aa). Residues 421–429 and Lys-444 contribute to the ATP site; that span reads IGVGSYSVC. Asp-532 serves as the catalytic Proton acceptor.

Belongs to the protein kinase superfamily. AGC Ser/Thr protein kinase family. S6 kinase subfamily. In terms of assembly, forms a complex with either MAPK1/ERK2 or MAPK3/ERK1 in quiescent cells. Transiently dissociates following mitogenic stimulation. Interacts with FBXO5; cooperate to induce the metaphase arrest of early blastomeres; increases and stabilizes interaction of FBXO5 with CDC20. Mg(2+) is required as a cofactor. In terms of processing, activated by phosphorylation at Ser-218 by PDPK1. Autophosphorylated on Ser-377, as part of the activation process. May be phosphorylated at Thr-356 and Ser-360 by MAPK1/ERK2 and MAPK3/ERK1. Post-translationally, N-terminal myristoylation results in an activated kinase in the absence of added growth factors. In terms of tissue distribution, widely expressed with higher expression in lung, skeletal muscle, brain, uterus, ovary, thyroid and prostate.

The protein localises to the nucleus. Its subcellular location is the cytoplasm. It carries out the reaction L-seryl-[protein] + ATP = O-phospho-L-seryl-[protein] + ADP + H(+). The catalysed reaction is L-threonyl-[protein] + ATP = O-phospho-L-threonyl-[protein] + ADP + H(+). Its activity is regulated as follows. Upon extracellular signal or mitogen stimulation, phosphorylated at Thr-570 in the C-terminal kinase domain (CTKD) by MAPK1/ERK2 and MAPK3/ERK1. The activated CTKD then autophosphorylates Ser-377, allowing binding of PDPK1, which in turn phosphorylates Ser-218 in the N-terminal kinase domain (NTDK) leading to the full activation of the protein and subsequent phosphorylation of the substrates by the NTKD. Functionally, serine/threonine-protein kinase that acts downstream of ERK (MAPK1/ERK2 and MAPK3/ERK1) signaling and mediates mitogenic and stress-induced activation of transcription factors, regulates translation, and mediates cellular proliferation, survival, and differentiation. May function as tumor suppressor in epithelial ovarian cancer cells. The sequence is that of Ribosomal protein S6 kinase alpha-2 (RPS6KA2) from Homo sapiens (Human).